The chain runs to 497 residues: 3-octaprenyl-4-hydroxybenzoate carboxy-lyase (497 aa).

N175 lines the Mn(2+) pocket. Residues 178 to 180 (IYR), 192 to 194 (RWL), and 197 to 198 (RG) each bind prenylated FMN. E241 contacts Mn(2+). D290 acts as the Proton donor in catalysis.

Belongs to the UbiD family. In terms of assembly, homohexamer. Requires prenylated FMN as cofactor. Mn(2+) is required as a cofactor.

The protein localises to the cell membrane. It carries out the reaction a 4-hydroxy-3-(all-trans-polyprenyl)benzoate + H(+) = a 2-(all-trans-polyprenyl)phenol + CO2. The protein operates within cofactor biosynthesis; ubiquinone biosynthesis. In terms of biological role, catalyzes the decarboxylation of 3-octaprenyl-4-hydroxy benzoate to 2-octaprenylphenol, an intermediate step in ubiquinone biosynthesis. The protein is 3-octaprenyl-4-hydroxybenzoate carboxy-lyase of Shigella dysenteriae serotype 1 (strain Sd197).